A 212-amino-acid chain; its full sequence is Peptide methionine sulfoxide reductase MsrA (212 aa).

Residue Cys-52 is part of the active site.

This sequence belongs to the MsrA Met sulfoxide reductase family.

The enzyme catalyses L-methionyl-[protein] + [thioredoxin]-disulfide + H2O = L-methionyl-(S)-S-oxide-[protein] + [thioredoxin]-dithiol. It catalyses the reaction [thioredoxin]-disulfide + L-methionine + H2O = L-methionine (S)-S-oxide + [thioredoxin]-dithiol. Has an important function as a repair enzyme for proteins that have been inactivated by oxidation. Catalyzes the reversible oxidation-reduction of methionine sulfoxide in proteins to methionine. The polypeptide is Peptide methionine sulfoxide reductase MsrA (Salmonella newport (strain SL254)).